We begin with the raw amino-acid sequence, 142 residues long: HTH-type transcriptional regulator MntR (142 aa).

Residues Met1–Thr63 form the HTH dtxR-type domain. Positions 8, 11, 77, 99, 102, and 103 each coordinate Mn(2+).

Belongs to the DtxR/MntR family. Homodimer.

It localises to the cytoplasm. With respect to regulation, DNA binding is strongly activated by Mn(2+). Its function is as follows. Central regulator of manganese homeostasis. The chain is HTH-type transcriptional regulator MntR from Bacillus cereus (strain G9842).